Here is a 235-residue protein sequence, read N- to C-terminus: Heme oxygenase (235 aa).

His-19 contacts heme b.

It belongs to the heme oxygenase family.

It is found in the plastid. It localises to the chloroplast. It catalyses the reaction heme b + 3 reduced [NADPH--hemoprotein reductase] + 3 O2 = biliverdin IXalpha + CO + Fe(2+) + 3 oxidized [NADPH--hemoprotein reductase] + 3 H2O + H(+). In terms of biological role, catalyzes the opening of the heme ring with the release of iron. Key enzyme in the synthesis of the chromophoric part of the photosynthetic antennae. This Rhodella violacea (Red alga) protein is Heme oxygenase (pbsA).